The sequence spans 76 residues: MAKLIYSYLFISMFVLSVLLALPNAEGADIKRCVVDVKLSKPCTFQECIPLCFQRYNGNGVCTGKKNEICTCAYNC.

An N-terminal signal peptide occupies residues M1 to G27. Cystine bridges form between C33-C76, C43-C62, C48-C70, and C52-C72.

It belongs to the DEFL family.

It is found in the secreted. In Arabidopsis thaliana (Mouse-ear cress), this protein is Defensin-like protein 163 (LCR24).